An 897-amino-acid polypeptide reads, in one-letter code: Protein SAP1 (897 aa).

Disordered regions lie at residues 112-144, 195-219, 302-398, 413-438, and 456-561; these read EEPAPRNDMPSSKTYTNHSSSFTRSTEPPPVFQ, PSKPLSNNASRQHKNPIEHNDPPLK, QMSD…TKST, SKSNTKPIIKSNASSPTSSLTVPNSV, and KKVA…REEP. Polar residues predominate over residues 120 to 137; sequence MPSSKTYTNHSSSFTRST. Over residues 209-219 the composition is skewed to basic and acidic residues; sequence NPIEHNDPPLK. Residues 307 to 321 show a composition bias toward low complexity; that stretch reads SVTSSTSSNKSVSSS. The span at 364–380 shows a compositional bias: polar residues; it reads LETSTTMDSSKIRNPQI. Positions 468-478 are enriched in basic residues; the sequence is KKSHPILKSKT. Low complexity predominate over residues 480-496; the sequence is KVPNSSSKKTSSHPSRP. Positions 497-523 are enriched in polar residues; that stretch reads VSNSKPYSHGASQNKKPSKNQTTSMSK. S536 is modified (phosphoserine). 645 to 652 is a binding site for ATP; the sequence is GPPGTGKT.

This sequence belongs to the AAA ATPase family. As to quaternary structure, interacts with SPT2/SIN1.

The sequence is that of Protein SAP1 (SAP1) from Saccharomyces cerevisiae (strain ATCC 204508 / S288c) (Baker's yeast).